We begin with the raw amino-acid sequence, 705 residues long: 1,4-alpha-glucan branching enzyme GlgB (705 aa).

D393 serves as the catalytic Nucleophile. E446 functions as the Proton donor in the catalytic mechanism.

Belongs to the glycosyl hydrolase 13 family. GlgB subfamily. In terms of assembly, monomer.

It carries out the reaction Transfers a segment of a (1-&gt;4)-alpha-D-glucan chain to a primary hydroxy group in a similar glucan chain.. Its pathway is glycan biosynthesis; glycogen biosynthesis. Catalyzes the formation of the alpha-1,6-glucosidic linkages in glycogen by scission of a 1,4-alpha-linked oligosaccharide from growing alpha-1,4-glucan chains and the subsequent attachment of the oligosaccharide to the alpha-1,6 position. The chain is 1,4-alpha-glucan branching enzyme GlgB from Picrophilus torridus (strain ATCC 700027 / DSM 9790 / JCM 10055 / NBRC 100828 / KAW 2/3).